The chain runs to 315 residues: MTQEFEHLSVLLTETVAGLNIKPDGIYIDGTFGRGGHSRKVLEELGPNGRLIAIDRDPQAIAAAEQFKDDSRFQIVHGGFGQLADYVEDLGLKGKIDGVLLDFGVSSPQLDDAERGFSFLRDGPLDMRMDNSQGQTAAQWLARAEIEDMAWVFKTYGEEKNSRHIARCIAADREKAPFLRTKELADLIARITKNKERNKHPATRVFQAIRIYINSELEQIDQALEGALTVLAPEGRLSVISFHSLEDRMVKRFIRRNSQGESVPHGLPITEEEINKSRKLKGVGKAIKPSAEEIERNARARSSVLRIAQRLPYEA.

Residues 35 to 37 (GGH), Asp55, Phe80, Asp102, and Gln109 contribute to the S-adenosyl-L-methionine site.

The protein belongs to the methyltransferase superfamily. RsmH family.

The protein resides in the cytoplasm. It catalyses the reaction cytidine(1402) in 16S rRNA + S-adenosyl-L-methionine = N(4)-methylcytidine(1402) in 16S rRNA + S-adenosyl-L-homocysteine + H(+). Its function is as follows. Specifically methylates the N4 position of cytidine in position 1402 (C1402) of 16S rRNA. The sequence is that of Ribosomal RNA small subunit methyltransferase H from Shewanella halifaxensis (strain HAW-EB4).